Here is a 430-residue protein sequence, read N- to C-terminus: Dihydrolipoyllysine-residue acetyltransferase component of pyruvate dehydrogenase complex (430 aa).

The Lipoyl-binding domain maps to 2-77 (AFEFRLPDIG…VVGDVIVKID (76 aa)). Residue K43 is modified to N6-lipoyllysine. The disordered stretch occupies residues 80-122 (DAEDMQFKGHDDDSSSKEEPAKEEAPAEQAPVATQTEEVDENR). The segment covering 84-104 (MQFKGHDDDSSSKEEPAKEEA) has biased composition (basic and acidic residues). Residues 125 to 162 (KAMPSVRKYAREKGVNIKAVSGSGKNGRITKEDVDAYL) enclose the Peripheral subunit-binding (PSBD) domain. The interval 164–199 (GGAPTASNESAASATSEEVAETPAAPAAVSLEGDFP) is disordered. Residues 166–193 (APTASNESAASATSEEVAETPAAPAAVS) are compositionally biased toward low complexity. Residue H401 is part of the active site.

This sequence belongs to the 2-oxoacid dehydrogenase family. Forms a 24-polypeptide structural core with octahedral symmetry. (R)-lipoate is required as a cofactor.

The catalysed reaction is N(6)-[(R)-dihydrolipoyl]-L-lysyl-[protein] + acetyl-CoA = N(6)-[(R)-S(8)-acetyldihydrolipoyl]-L-lysyl-[protein] + CoA. The pyruvate dehydrogenase complex catalyzes the overall conversion of pyruvate to acetyl-CoA and CO(2). It contains multiple copies of three enzymatic components: pyruvate dehydrogenase (E1), dihydrolipoamide acetyltransferase (E2) and lipoamide dehydrogenase (E3). This Staphylococcus aureus (strain Mu50 / ATCC 700699) protein is Dihydrolipoyllysine-residue acetyltransferase component of pyruvate dehydrogenase complex (pdhC).